Reading from the N-terminus, the 105-residue chain is MTTTHIDQVSVSTQASVYFDGKCISHGVTLADGTKKSVGVILPATLTFNTGAPEVMECVAGSCDYKLPGSEVWLKSKPGDKFSIPGNTPFDIRVTEPYHYICHFG.

The protein belongs to the nucleoside phosphorylase PpnP family.

It catalyses the reaction a purine D-ribonucleoside + phosphate = a purine nucleobase + alpha-D-ribose 1-phosphate. The catalysed reaction is adenosine + phosphate = alpha-D-ribose 1-phosphate + adenine. It carries out the reaction cytidine + phosphate = cytosine + alpha-D-ribose 1-phosphate. The enzyme catalyses guanosine + phosphate = alpha-D-ribose 1-phosphate + guanine. It catalyses the reaction inosine + phosphate = alpha-D-ribose 1-phosphate + hypoxanthine. The catalysed reaction is thymidine + phosphate = 2-deoxy-alpha-D-ribose 1-phosphate + thymine. It carries out the reaction uridine + phosphate = alpha-D-ribose 1-phosphate + uracil. The enzyme catalyses xanthosine + phosphate = alpha-D-ribose 1-phosphate + xanthine. In terms of biological role, catalyzes the phosphorolysis of diverse nucleosides, yielding D-ribose 1-phosphate and the respective free bases. Can use uridine, adenosine, guanosine, cytidine, thymidine, inosine and xanthosine as substrates. Also catalyzes the reverse reactions. The chain is Pyrimidine/purine nucleoside phosphorylase from Albidiferax ferrireducens (strain ATCC BAA-621 / DSM 15236 / T118) (Rhodoferax ferrireducens).